The primary structure comprises 249 residues: AA9 family lytic polysaccharide monooxygenase cel61B (249 aa).

The first 19 residues, 1-19 (MKSCAILAALGCLAGSVLG), serve as a signal peptide directing secretion. Residue histidine 20 coordinates Cu(2+). The N-linked (GlcNAc...) asparagine glycan is linked to asparagine 25. 2 disulfides stabilise this stretch: cysteine 78-cysteine 198 and cysteine 120-cysteine 124. Histidine 108 is a binding site for Cu(2+). Residues histidine 184 and glutamine 193 each coordinate O2. A Cu(2+)-binding site is contributed by tyrosine 195.

The protein belongs to the polysaccharide monooxygenase AA9 family. In terms of assembly, monomer. Requires Cu(2+) as cofactor.

The protein localises to the secreted. The catalysed reaction is [(1-&gt;4)-beta-D-glucosyl]n+m + reduced acceptor + O2 = 4-dehydro-beta-D-glucosyl-[(1-&gt;4)-beta-D-glucosyl]n-1 + [(1-&gt;4)-beta-D-glucosyl]m + acceptor + H2O.. Its function is as follows. Lytic polysaccharide monooxygenase (LPMO) that depolymerizes crystalline and amorphous polysaccharides via the oxidation of scissile alpha- or beta-(1-4)-glycosidic bonds, yielding C1 or C4 oxidation products. Catalysis by LPMOs requires the reduction of the active-site copper from Cu(II) to Cu(I) by a reducing agent and H(2)O(2) or O(2) as a cosubstrate. In Hypocrea jecorina (strain QM6a) (Trichoderma reesei), this protein is AA9 family lytic polysaccharide monooxygenase cel61B.